Here is a 199-residue protein sequence, read N- to C-terminus: NAD(P)H dehydrogenase (quinone) (199 aa).

The 187-residue stretch at 4–190 (VLVLYYSAYG…AGARYQGKTI (187 aa)) folds into the Flavodoxin-like domain. FMN is bound by residues 10-15 (SAYGHI) and 78-80 (TRF). Tyr-12 is an NAD(+) binding site. Residue Trp-98 coordinates substrate. Residues 113–119 (STATQHG) and His-134 each bind FMN.

Belongs to the WrbA family. It depends on FMN as a cofactor.

The catalysed reaction is a quinone + NADH + H(+) = a quinol + NAD(+). It carries out the reaction a quinone + NADPH + H(+) = a quinol + NADP(+). This is NAD(P)H dehydrogenase (quinone) from Rhodopseudomonas palustris (strain HaA2).